The following is a 221-amino-acid chain: Urease accessory protein UreE (221 aa).

The tract at residues 160–194 is disordered; sequence VPGTNKTTGDLAEEEQETERHEPHAHAIGEHHHEK. Residues 177–194 show a composition bias toward basic and acidic residues; it reads TERHEPHAHAIGEHHHEK.

Belongs to the UreE family.

The protein resides in the cytoplasm. Its function is as follows. Involved in urease metallocenter assembly. Binds nickel. Probably functions as a nickel donor during metallocenter assembly. This Bifidobacterium longum subsp. infantis (strain ATCC 15697 / DSM 20088 / JCM 1222 / NCTC 11817 / S12) protein is Urease accessory protein UreE.